Here is an 850-residue protein sequence, read N- to C-terminus: MPDRRLSQLLKSKLLRRSSTTATTSPKQNQKPVNAQKKAAVGADPLVDPNSTSDLSCSLPPHLLTSNEGEGDAKSRAYSIISSIPLDHPSSPDEIPGPATGSSAGCEQYFTHFDRSGANSRQEGSQNGSIQQSPTFTRTLRHKQLTEEKDKGKLQSREGDQRGEYGYQRIRNDSNDSDPQYSLTTELANKPSTPQTPAGDDSLHSPSATPLPLSPSLPGPTGASSLQAAYRPVRENSSVPLVESQLTPSLGAVAEDSSGESAFHFVGPSSSSPFPKRPPLGFRRQSLLPASHQHLISGLLGFGPSQNLGQGSGHPSTVNADMIPRKVWVKRPGGSATLVPTMEDSLVDELRDQVIMKYANSLGRTFDSPDIMIRISPREGSNRQSTPERILSPEEPLGVVLDTYFPGGQTVDEALVIDIPQRRTPKPSPRHPVYYHHSEPGEHGEYFPLMPANPNAPTPPTHPSASSTSVNAHHTGPSISILTTDSNMASCPQPPVAAPQVPTPPGPPPESPQTKTHTPPARVASPRPRPTKPKKAGNGQSPNAAFGGLIEGTVPPINVLIVEDNIINQKLLEAFMKRLSVRWKCAANGEEAVRKWREGGFHLVLMDIQLPVMNGLDATKEIRRLERLNGIGVFTKTASGRSSASSLSPEVNQASSEVSLSEEDTLHDLSLFKSPVIIVALTASSLQSDRHEALAAGCNDFLTKPVGFPWLEQKVTEWGCMQALIDFEGWRKWRGFADEPQSSSPTDGGFTSPLQAGANGVSSRTSTSPSSAAVNATARAFATGPGAGKRKSTVPELTKPVDILPEEPPGSGSGEGNETLDSPASPLTSVHVGDPTEPPGDEEQQALDAT.

2 disordered regions span residues 1–225 (MPDR…GASS) and 419–542 (IPQR…GQSP). Residues 7 to 25 (SQLLKSKLLRRSSTTATTS) show a composition bias toward low complexity. Positions 117–138 (GANSRQEGSQNGSIQQSPTFTR) are enriched in polar residues. Basic and acidic residues predominate over residues 144-163 (QLTEEKDKGKLQSREGDQRG). The span at 177 to 196 (SDPQYSLTTELANKPSTPQT) shows a compositional bias: polar residues. A compositionally biased stretch (basic and acidic residues) spans 436–445 (HHSEPGEHGE). Polar residues predominate over residues 477-490 (PSISILTTDSNMAS). The span at 492 to 511 (PQPPVAAPQVPTPPGPPPES) shows a compositional bias: pro residues. A Response regulatory domain is found at 558 to 719 (NVLIVEDNII…WLEQKVTEWG (162 aa)). Aspartate 607 is subject to 4-aspartylphosphate. The segment at 736–850 (FADEPQSSSP…DEEQQALDAT (115 aa)) is disordered. Positions 762–782 (SSRTSTSPSSAAVNATARAFA) are enriched in low complexity. The segment covering 819-828 (TLDSPASPLT) has biased composition (polar residues). A compositionally biased stretch (acidic residues) spans 839–850 (PGDEEQQALDAT).

The protein belongs to the SSK1 family.

It localises to the cytoplasm. Its function is as follows. Final receptor of the osmolarity two-component system regulatory system, which controls activity of the sakA mitogen-activated protein kinase (MAPK) pathway in response to changes in the osmolarity of the extracellular environment. Regulates the germination in the airways that drives enhanced disease initiation and inflammation in the lungs. In Aspergillus fumigatus (strain ATCC MYA-4609 / CBS 101355 / FGSC A1100 / Af293) (Neosartorya fumigata), this protein is Response regulator sskA.